We begin with the raw amino-acid sequence, 210 residues long: NAD(P)H-quinone oxidoreductase subunit I (210 aa).

2 consecutive 4Fe-4S ferredoxin-type domains span residues 54 to 83 (GRIHFEFDKCIACEICVRVCPIDLPVVDWA) and 94 to 123 (YSYSIDFGVCIFCANCVEFCPTNCLSVTED). 8 residues coordinate [4Fe-4S] cluster: Cys63, Cys66, Cys69, Cys73, Cys103, Cys106, Cys109, and Cys113.

The protein belongs to the complex I 23 kDa subunit family. As to quaternary structure, NDH-1 is composed of at least 11 different subunits. [4Fe-4S] cluster serves as cofactor.

The protein resides in the cellular thylakoid membrane. It carries out the reaction a plastoquinone + NADH + (n+1) H(+)(in) = a plastoquinol + NAD(+) + n H(+)(out). It catalyses the reaction a plastoquinone + NADPH + (n+1) H(+)(in) = a plastoquinol + NADP(+) + n H(+)(out). In terms of biological role, NDH-1 shuttles electrons from an unknown electron donor, via FMN and iron-sulfur (Fe-S) centers, to quinones in the respiratory and/or the photosynthetic chain. The immediate electron acceptor for the enzyme in this species is believed to be plastoquinone. Couples the redox reaction to proton translocation, and thus conserves the redox energy in a proton gradient. The polypeptide is NAD(P)H-quinone oxidoreductase subunit I (Synechococcus sp. (strain JA-2-3B'a(2-13)) (Cyanobacteria bacterium Yellowstone B-Prime)).